The following is a 533-amino-acid chain: Probable intron-encoded endonuclease 3 (533 aa).

3 helical membrane-spanning segments follow: residues 1 to 21 (MYLS…FFGR), 30 to 50 (LITC…FFEV), and 81 to 101 (LTVA…IYSI). Residues 1 to 108 (MYLSIIILPL…YSISYMSHDP (108 aa)) form a ndh-5 exon 1 encoded region. The ndh-5 intron 1 encoded stretch occupies residues 109 to 533 (RGRVRGKRVY…SISLLLGRRR (425 aa)).

In the N-terminal section; belongs to the complex I subunit 5 family. The protein in the C-terminal section; belongs to the LAGLIDADG endonuclease family.

The protein localises to the mitochondrion membrane. Functionally, mitochondrial DNA endonuclease involved in intron homing. The sequence is that of Probable intron-encoded endonuclease 3 from Neurospora crassa (strain ATCC 24698 / 74-OR23-1A / CBS 708.71 / DSM 1257 / FGSC 987).